Here is a 392-residue protein sequence, read N- to C-terminus: GPI alpha-1,4-mannosyltransferase I, catalytic subunit (392 aa).

Over 1–4 (MEAR) the chain is Cytoplasmic. Residues 5–25 (VCVLFGAAALLRLLLLCVGVY) traverse the membrane as a helical segment. The Lumenal segment spans residues 26–65 (QDQTLKLKYTDVDYHVFTDAARFITQGESPYRRSTFRYTP). A helical transmembrane segment spans residues 66-86 (LLALLLVPNVYLSLLFGKLLF). Topologically, residues 87-125 (GFCDLLSGLLMFRLLVLRGASHGSACVSCGLWLLNPLPM) are cytoplasmic. Residues 126–148 (AVSTRGNAESVLAVLVLSTLLCL) traverse the membrane as a helical segment. Residues 149-156 (QLRKHTTA) lie on the Lumenal side of the membrane. Residues 157–177 (ALLFGLSVHMKIYPVTYALPI) traverse the membrane as a helical segment. Topologically, residues 178 to 198 (ALALTAAPARGRGVLLRFFSP) are cytoplasmic. A helical transmembrane segment spans residues 199–219 (ALLRFAAVSAAVFLSLGLIFY). The Lumenal portion of the chain corresponds to 220–261 (CRYGWEFLQEAYLYHLTRRDLRHNFSPFFYLQYVCAERCWSS). The helical transmembrane segment at 262–282 (GLLPLLLLPQLLLLLLASAAF) threads the bilayer. Over 283–302 (SSDLPFCCFLHTAVFVSFNR) the chain is Cytoplasmic. The helical transmembrane segment at 303–323 (VCTSQYFLWYLCLLPVVLPRL) threads the bilayer. Over 324–330 (RLRLGRG) the chain is Lumenal. A helical transmembrane segment spans residues 331–351 (LLLLLLWLLLQGLWLAPAYLL). Over 352-360 (EFQGWNSFS) the chain is Cytoplasmic. A helical membrane pass occupies residues 361–381 (WIWAASLLFLLTNTFILAQII). Residues 382–392 (QHYRPHDRKAD) are Lumenal-facing.

It belongs to the PIGM family. As to quaternary structure, part of the glycosylphosphatidylinositol-mannosyltransferase I complex that is composed of PIGM and PIGX.

Its subcellular location is the endoplasmic reticulum membrane. It functions in the pathway glycolipid biosynthesis; glycosylphosphatidylinositol-anchor biosynthesis. Catalytic subunit of the glycosylphosphatidylinositol-mannosyltransferase I complex which catalyzes the transfer of the first mannose, via an alpha-1,4 bond from a dolichol-phosphate-mannose (Dol-P-Man) to the glucosaminyl acyl phosphatidylinositol (GlcN-(acyl)PI) intermediate to generate alpha-D-Man-(1-&gt;4)-alpha-D-GlcN-(1-&gt;6)-(1-radyl,2-acyl-sn-glycero-3-phospho)-2-acyl-inositol and participates in the sixth step of the glycosylphosphatidylinositol-anchor biosynthesis. This is GPI alpha-1,4-mannosyltransferase I, catalytic subunit from Danio rerio (Zebrafish).